Consider the following 391-residue polypeptide: MASGGVVKKEIGGNHDVVRFGVNDSVKGDLAPPHPLQASVHKEAKFWADKKRFGAEAIYGSAFNIRKDLDAQILSKFQRPPGALPSSMLGYEALTGSLDDFGFEDYLNYAAASEDGWVLGRGALELLLGGTAYTQATSAPQISLSMQQVQRRELQLVAVSAMLIDCKYEEIWAPEVNDFIFISDSAYTREQILAMEKGILNKLQWNLTIPTPYVFIMMLSASADNKSDKENAEALKFKRLSQSRQQLIDWSVKIKVSKEHGGFMRFIQVSCLGASASSSRMLRAKAAGEESVLKEFPEPLRLLISHRQSMGTCILNFHSRIQPVYVVDVAAAIVNSLKDDGTSMGKSYGLGGPEIYTVHDLAELMYETICEWPRYIDVPLPIARAIASPES.

This sequence belongs to the cyclin family. Cyclin AB subfamily.

This is Cyclin-B1-2 (CYCB1-2) from Oryza sativa subsp. japonica (Rice).